The primary structure comprises 421 residues: RNA exonuclease 4 (421 aa).

Disordered regions lie at residues 1-51 (MAKA…ETKK) and 79-179 (ENQA…QPPK). Polar residues predominate over residues 11 to 24 (SPCSGSLGKTANTP). Over residues 25-36 (KQKRKQKQRKFW) the composition is skewed to basic residues. 3 stretches are compositionally biased toward basic and acidic residues: residues 92–107 (PKKD…EESV), 140–149 (AAEKSDEVSK), and 161–170 (DTEHQGKKPQ). The Exonuclease domain maps to 234–385 (TVAMDCEMVG…QDAQAAMRLY (152 aa)).

Belongs to the REXO4 family.

The protein resides in the nucleus. The sequence is that of RNA exonuclease 4 (rexo4) from Xenopus laevis (African clawed frog).